Reading from the N-terminus, the 459-residue chain is Ribulose bisphosphate carboxylase large chain (459 aa).

Residue Lys-4 is modified to N6,N6,N6-trimethyllysine. Residues Asn-113 and Thr-163 each coordinate substrate. The active-site Proton acceptor is the Lys-165. Lys-167 provides a ligand contact to substrate. The Mg(2+) site is built by Lys-191, Asp-193, and Glu-194. At Lys-191 the chain carries N6-carboxylysine. His-284 serves as the catalytic Proton acceptor. Substrate contacts are provided by Arg-285, His-317, and Ser-369.

The protein belongs to the RuBisCO large chain family. Type I subfamily. As to quaternary structure, heterohexadecamer of 8 large chains and 8 small chains; disulfide-linked. The disulfide link is formed within the large subunit homodimers. It depends on Mg(2+) as a cofactor. Post-translationally, the disulfide bond which can form in the large chain dimeric partners within the hexadecamer appears to be associated with oxidative stress and protein turnover.

It is found in the plastid. The protein localises to the chloroplast. The catalysed reaction is 2 (2R)-3-phosphoglycerate + 2 H(+) = D-ribulose 1,5-bisphosphate + CO2 + H2O. It carries out the reaction D-ribulose 1,5-bisphosphate + O2 = 2-phosphoglycolate + (2R)-3-phosphoglycerate + 2 H(+). In terms of biological role, ruBisCO catalyzes two reactions: the carboxylation of D-ribulose 1,5-bisphosphate, the primary event in carbon dioxide fixation, as well as the oxidative fragmentation of the pentose substrate in the photorespiration process. Both reactions occur simultaneously and in competition at the same active site. In Roridula gorgonias (South African fly bush), this protein is Ribulose bisphosphate carboxylase large chain.